Reading from the N-terminus, the 436-residue chain is Protein translocase subunit SecY (436 aa).

Transmembrane regions (helical) follow at residues isoleucine 18–glycine 38, leucine 69–valine 89, tyrosine 116–threonine 138, isoleucine 154–phenylalanine 174, methionine 187–valine 207, valine 214–glutamate 234, methionine 266–isoleucine 286, proline 314–isoleucine 334, valine 375–isoleucine 395, and glycine 396–leucine 416.

The protein belongs to the SecY/SEC61-alpha family. Component of the Sec protein translocase complex. Heterotrimer consisting of SecY, SecE and SecG subunits. The heterotrimers can form oligomers, although 1 heterotrimer is thought to be able to translocate proteins. Interacts with the ribosome. Interacts with SecDF, and other proteins may be involved. Interacts with SecA.

The protein resides in the cell membrane. Functionally, the central subunit of the protein translocation channel SecYEG. Consists of two halves formed by TMs 1-5 and 6-10. These two domains form a lateral gate at the front which open onto the bilayer between TMs 2 and 7, and are clamped together by SecE at the back. The channel is closed by both a pore ring composed of hydrophobic SecY resides and a short helix (helix 2A) on the extracellular side of the membrane which forms a plug. The plug probably moves laterally to allow the channel to open. The ring and the pore may move independently. The polypeptide is Protein translocase subunit SecY (Micrococcus luteus (Micrococcus lysodeikticus)).